The sequence spans 836 residues: Protein O-mannosyl-transferase TMTC2 (836 aa).

The chain crosses the membrane as a helical span at residues 1 to 21 (MIAELVSSALGLALYLNTLSA). At 22 to 84 (DFCYDDSRAI…LNHAIGGLNP (63 aa)) the chain is on the extracellular side. A helical membrane pass occupies residues 85-105 (WSYHLVNVLLHAAVTGLFTSF). Residues 106-107 (SK) are Cytoplasmic-facing. A helical transmembrane segment spans residues 108–128 (ILLGDGYWTFMAGLMFASHPI). Over 129 to 132 (HTEA) the chain is Extracellular. Residues 133–153 (VAGIVGRADVGASLFFLLSLL) form a helical membrane-spanning segment. The Cytoplasmic segment spans residues 154 to 162 (CYIKHCSTR). The next 2 membrane-spanning stretches (helical) occupy residues 163 to 184 (GYSARTWGWFLGSGLCAGCSML) and 185 to 204 (WKEQGVTVLAVSAVYDVFVF). At 205 to 220 (HRLKIKQILPTIYKRK) the chain is on the cytoplasmic side. A helical transmembrane segment spans residues 221 to 241 (NLSLFLSISLLIFWGSSLLGA). Over 242–312 (RLYWMGNKPP…KTVCDWRNLH (71 aa)) the chain is Extracellular. Residues 313 to 333 (TVAFYTGLLLLAYYGLKSPSV) form a helical membrane-spanning segment. Residues 334 to 399 (DRECNGKTVT…TENIVVLSLS (66 aa)) lie on the Cytoplasmic side of the membrane. Residues 400–420 (LLIIPFVPATNLFFYVGFVIA) form a helical membrane-spanning segment. The Extracellular segment spans residues 421–422 (ER). Residues 423-443 (VLYIPSMGFCLLITVGARALY) traverse the membrane as a helical segment. The Cytoplasmic portion of the chain corresponds to 444 to 449 (VKVQKR). Residues 450-470 (FLKSLIFYATATLIVFYGLKT) form a helical membrane-spanning segment. Residues 471–836 (AIRNGDWQNE…EKQGLKTSKT (366 aa)) are Extracellular-facing. 9 TPR repeats span residues 493–526 (AKAWGNLGNVLKSQSKISEAESAYRNALYYRSNM), 527–560 (ADMLYNLGLLLQENSRFAEALHYYKLAIGSRPTL), 561–594 (ASAYLNTGIILMNQGRTEEARRTFLKCSEIPDEN), 606–639 (TSCLYNLGKLYHEQGHYEEALSVYKEAIQKMPRQ), 643–676 (QSLYNMMGEAYMRLSKLPEAEHWYMESLRSKTDH), 677–710 (IPAHLTYGKLLALTGRKSEAEKLFLKAIELDPTK), 711–744 (GNCYMHYGQFLLEEARLIEAAEMAKKAAELDSTE), 745–778 (FDVVFNAAHMLRQASLNEAAEKYYDLAARLRPNY), and 779–812 (PAALMNLGAILHLNGRLQKAEANYLRALQLKPDD).

The protein belongs to the TMTC family.

Its subcellular location is the membrane. It is found in the endoplasmic reticulum. The catalysed reaction is a di-trans,poly-cis-dolichyl beta-D-mannosyl phosphate + L-seryl-[protein] = 3-O-(alpha-D-mannosyl)-L-seryl-[protein] + a di-trans,poly-cis-dolichyl phosphate + H(+). It carries out the reaction a di-trans,poly-cis-dolichyl beta-D-mannosyl phosphate + L-threonyl-[protein] = 3-O-(alpha-D-mannosyl)-L-threonyl-[protein] + a di-trans,poly-cis-dolichyl phosphate + H(+). It participates in protein modification; protein glycosylation. In terms of biological role, transfers mannosyl residues to the hydroxyl group of serine or threonine residues. The 4 members of the TMTC family are O-mannosyl-transferases dedicated primarily to the cadherin superfamily, each member seems to have a distinct role in decorating the cadherin domains with O-linked mannose glycans at specific regions. Also acts as O-mannosyl-transferase on other proteins such as PDIA3. The chain is Protein O-mannosyl-transferase TMTC2 from Homo sapiens (Human).